Here is a 523-residue protein sequence, read N- to C-terminus: tRNA-2-methylthio-N(6)-dimethylallyladenosine synthase (523 aa).

A disordered region spans residues 1-26; it reads MNEKQRLEQTGQIQTASHPADRKSDL. The span at 8-17 shows a compositional bias: polar residues; it reads EQTGQIQTAS. Positions 80 to 198 constitute an MTTase N-terminal domain; that stretch reads RKFYIRTYGC…LPYILHEAYM (119 aa). Positions 89, 125, 159, 235, 239, and 242 each coordinate [4Fe-4S] cluster. In terms of domain architecture, Radical SAM core spans 221-451; that stretch reads RKGNIKAWVN…NALVQEIAAK (231 aa). Residues 454–517 form the TRAM domain; it reads KQYEGQVVEV…TWTLTGELAN (64 aa).

It belongs to the methylthiotransferase family. MiaB subfamily. As to quaternary structure, monomer. [4Fe-4S] cluster serves as cofactor.

The protein localises to the cytoplasm. It carries out the reaction N(6)-dimethylallyladenosine(37) in tRNA + (sulfur carrier)-SH + AH2 + 2 S-adenosyl-L-methionine = 2-methylsulfanyl-N(6)-dimethylallyladenosine(37) in tRNA + (sulfur carrier)-H + 5'-deoxyadenosine + L-methionine + A + S-adenosyl-L-homocysteine + 2 H(+). Catalyzes the methylthiolation of N6-(dimethylallyl)adenosine (i(6)A), leading to the formation of 2-methylthio-N6-(dimethylallyl)adenosine (ms(2)i(6)A) at position 37 in tRNAs that read codons beginning with uridine. The sequence is that of tRNA-2-methylthio-N(6)-dimethylallyladenosine synthase from Geobacillus thermodenitrificans (strain NG80-2).